A 184-amino-acid chain; its full sequence is ATP-dependent protease subunit HslV (184 aa).

The active site involves threonine 11. Residues alanine 165, cysteine 168, and threonine 171 each contribute to the Na(+) site.

It belongs to the peptidase T1B family. HslV subfamily. A double ring-shaped homohexamer of HslV is capped on each side by a ring-shaped HslU homohexamer. The assembly of the HslU/HslV complex is dependent on binding of ATP.

It localises to the cytoplasm. The enzyme catalyses ATP-dependent cleavage of peptide bonds with broad specificity.. With respect to regulation, allosterically activated by HslU binding. In terms of biological role, protease subunit of a proteasome-like degradation complex believed to be a general protein degrading machinery. The sequence is that of ATP-dependent protease subunit HslV from Zymomonas mobilis subsp. mobilis (strain ATCC 31821 / ZM4 / CP4).